Here is a 488-residue protein sequence, read N- to C-terminus: Erythromycin resistance ATP-binding protein MsrA (488 aa).

Positions 6–199 (IKFNQINHKL…NQYEQEQLEQ (194 aa)) constitute an ABC transporter 1 domain. 38–45 (GGNGTGKT) contributes to the ATP binding site. The Q-linker, rich in Glu and hydrophilic AA stretch occupies residues 200–298 (QRKYEQYISE…KIYDIHNNYP (99 aa)). Residues 211 to 255 (QRLSQASKAKRNQAQQMAQASSKQKNKSIAPDRLSASKEKGTVEK) form a disordered region. The segment covering 222-233 (NQAQQMAQASSK) has biased composition (low complexity). A compositionally biased stretch (basic and acidic residues) spans 245–255 (SASKEKGTVEK). The ABC transporter 2 domain maps to 299–487 (IIAQNLTLVK…ELTGQSIHDI (189 aa)). 331-338 (GANGVGKT) lines the ATP pocket.

This sequence belongs to the ABC transporter superfamily.

Functionally, confers resistance to 14-membered ring macrolides (like erythromycin) and to B streptogramins, by acting as an ATP-dependent efflux pump. The chain is Erythromycin resistance ATP-binding protein MsrA (msrA) from Staphylococcus epidermidis.